The primary structure comprises 74 residues: MYVGRDMSELNMVSKKDWKNSELAYFHHAFQQIMPYLNEEGQSKYRELTQEIEARGGMKRNEADYSHGTRVSYD.

This is an uncharacterized protein from Bacillus subtilis (strain 168).